Consider the following 291-residue polypeptide: 4-diphosphocytidyl-2-C-methyl-D-erythritol kinase (291 aa).

Residue K10 is part of the active site. 100 to 110 (PIGGGLGGGSS) contacts ATP. The active site involves D142.

It belongs to the GHMP kinase family. IspE subfamily. In terms of assembly, homodimer.

The catalysed reaction is 4-CDP-2-C-methyl-D-erythritol + ATP = 4-CDP-2-C-methyl-D-erythritol 2-phosphate + ADP + H(+). Its pathway is isoprenoid biosynthesis; isopentenyl diphosphate biosynthesis via DXP pathway; isopentenyl diphosphate from 1-deoxy-D-xylulose 5-phosphate: step 3/6. Catalyzes the phosphorylation of the position 2 hydroxy group of 4-diphosphocytidyl-2C-methyl-D-erythritol. In Hamiltonella defensa subsp. Acyrthosiphon pisum (strain 5AT), this protein is 4-diphosphocytidyl-2-C-methyl-D-erythritol kinase.